A 450-amino-acid chain; its full sequence is Glutamate--tRNA ligase 2 (450 aa).

Positions 10–20 (PSPTGRIHIGN) match the 'HIGH' region motif. The short motif at 243–247 (GFSKR) is the 'KMSKS' region element. An ATP-binding site is contributed by Lys246.

It belongs to the class-I aminoacyl-tRNA synthetase family. Glutamate--tRNA ligase type 1 subfamily. In terms of assembly, monomer.

It is found in the cytoplasm. The catalysed reaction is tRNA(Glu) + L-glutamate + ATP = L-glutamyl-tRNA(Glu) + AMP + diphosphate. Catalyzes the attachment of glutamate to tRNA(Glu) in a two-step reaction: glutamate is first activated by ATP to form Glu-AMP and then transferred to the acceptor end of tRNA(Glu). The chain is Glutamate--tRNA ligase 2 from Beijerinckia indica subsp. indica (strain ATCC 9039 / DSM 1715 / NCIMB 8712).